Here is a 246-residue protein sequence, read N- to C-terminus: Exosome complex component Rrp41 (246 aa).

Belongs to the RNase PH family. Rrp41 subfamily. As to quaternary structure, component of the archaeal exosome complex. Forms a hexameric ring-like arrangement composed of 3 Rrp41-Rrp42 heterodimers. The hexameric ring associates with a trimer of Rrp4 and/or Csl4 subunits.

The protein resides in the cytoplasm. Catalytic component of the exosome, which is a complex involved in RNA degradation. Has 3'-&gt;5' exoribonuclease activity. Can also synthesize heteromeric RNA-tails. This chain is Exosome complex component Rrp41, found in Pyrobaculum aerophilum (strain ATCC 51768 / DSM 7523 / JCM 9630 / CIP 104966 / NBRC 100827 / IM2).